The chain runs to 150 residues: Transcriptional repressor NrdR (150 aa).

A zinc finger lies at 3-34 (CPFCAHPDSKVVDSRPDKGGAAIRRRRECESC). The ATP-cone domain maps to 49 to 139 (PLVLKKDGRR…VYRSFKDVNE (91 aa)).

Belongs to the NrdR family. Requires Zn(2+) as cofactor.

Functionally, negatively regulates transcription of bacterial ribonucleotide reductase nrd genes and operons by binding to NrdR-boxes. This chain is Transcriptional repressor NrdR, found in Geobacter metallireducens (strain ATCC 53774 / DSM 7210 / GS-15).